Reading from the N-terminus, the 246-residue chain is 5'-nucleotidase SurE (246 aa).

Positions 8, 9, 39, and 91 each coordinate a divalent metal cation.

This sequence belongs to the SurE nucleotidase family. Requires a divalent metal cation as cofactor.

The protein localises to the cytoplasm. It catalyses the reaction a ribonucleoside 5'-phosphate + H2O = a ribonucleoside + phosphate. Functionally, nucleotidase that shows phosphatase activity on nucleoside 5'-monophosphates. The polypeptide is 5'-nucleotidase SurE (Mannheimia succiniciproducens (strain KCTC 0769BP / MBEL55E)).